Here is a 72-residue protein sequence, read N- to C-terminus: PAMP-induced secreted peptide 1 (72 aa).

An N-terminal signal peptide occupies residues 1–30 (MRRVSWSTVLIVVVMVSLFFVEHVVVPAAA). 4-hydroxyproline occurs at positions 65 and 67.

Post-translationally, contains 4-hydroxyproline; hydroxylated on Pro-65 and Pro-67. In terms of tissue distribution, expressed in guard cells, hydathodes, leaf trichomes, and vascular tissues of leaves and roots.

The protein localises to the secreted. The protein resides in the extracellular space. It is found in the apoplast. In terms of biological role, endogenous secreted peptide that acts as elicitor of immune response and positive regulator of defense response. Amplifies the immune response triggered by flg22, the active epitope of bacterial flagellin. Acts as a negative regulator of root growth. This is PAMP-induced secreted peptide 1 from Arabidopsis thaliana (Mouse-ear cress).